Reading from the N-terminus, the 178-residue chain is Interleukin-10 (178 aa).

The first 18 residues, 1–18 (MHSSALLCCLVFLAGVAA), serve as a signal peptide directing secretion. 2 disulfide bridges follow: cysteine 30–cysteine 126 and cysteine 80–cysteine 132. A glycan (N-linked (GlcNAc...) asparagine) is linked at asparagine 134.

This sequence belongs to the IL-10 family. Homodimer. Interacts with IL10RA and IL10RB.

Its subcellular location is the secreted. Functionally, major immune regulatory cytokine that acts on many cells of the immune system where it has profound anti-inflammatory functions, limiting excessive tissue disruption caused by inflammation. Mechanistically, IL10 binds to its heterotetrameric receptor comprising IL10RA and IL10RB leading to JAK1 and STAT2-mediated phosphorylation of STAT3. In turn, STAT3 translocates to the nucleus where it drives expression of anti-inflammatory mediators. Targets antigen-presenting cells (APCs) such as macrophages and monocytes and inhibits their release of pro-inflammatory cytokines including granulocyte-macrophage colony-stimulating factor /GM-CSF, granulocyte colony-stimulating factor/G-CSF, IL-1 alpha, IL-1 beta, IL-6, IL-8 and TNF-alpha. Also interferes with antigen presentation by reducing the expression of MHC-class II and co-stimulatory molecules, thereby inhibiting their ability to induce T cell activation. In addition, controls the inflammatory response of macrophages by reprogramming essential metabolic pathways including mTOR signaling. The chain is Interleukin-10 (IL10) from Bos taurus (Bovine).